A 387-amino-acid chain; its full sequence is 3-ketoacyl-CoA thiolase (387 aa).

Catalysis depends on Cys-91, which acts as the Acyl-thioester intermediate. Active-site proton acceptor residues include His-343 and Cys-373.

The protein belongs to the thiolase-like superfamily. Thiolase family. In terms of assembly, heterotetramer of two alpha chains (FadB) and two beta chains (FadA).

The protein localises to the cytoplasm. The catalysed reaction is an acyl-CoA + acetyl-CoA = a 3-oxoacyl-CoA + CoA. It participates in lipid metabolism; fatty acid beta-oxidation. Catalyzes the final step of fatty acid oxidation in which acetyl-CoA is released and the CoA ester of a fatty acid two carbons shorter is formed. The protein is 3-ketoacyl-CoA thiolase of Aeromonas hydrophila subsp. hydrophila (strain ATCC 7966 / DSM 30187 / BCRC 13018 / CCUG 14551 / JCM 1027 / KCTC 2358 / NCIMB 9240 / NCTC 8049).